The following is a 72-amino-acid chain: Putative beta-neurotoxin (72 aa).

Positions 1–7 are cleaved as a signal peptide; it reads IDMVVEC. The region spanning 9–71 is the LCN-type CS-alpha/beta domain; sequence KDGYLMEHDG…TWSRATNRCG (63 aa). 4 disulfide bridges follow: Cys-19–Cys-70, Cys-23–Cys-45, Cys-31–Cys-51, and Cys-35–Cys-53.

Expressed by the venom gland.

The protein resides in the secreted. Beta toxins bind voltage-independently at site-4 of sodium channels (Nav) and shift the voltage of activation toward more negative potentials thereby affecting sodium channel activation and promoting spontaneous and repetitive firing. In Tityus pachyurus (Colombian scorpion), this protein is Putative beta-neurotoxin.